Consider the following 362-residue polypeptide: RING finger protein 32 (362 aa).

The segment at 127 to 169 adopts an RING-type 1; atypical zinc-finger fold; the sequence is CPICKEEFELRPQVLLSCSHVFHRACLQAFEKFTNKKTCPLCR. The region spanning 186-215 is the IQ domain; that stretch reads RIKCVTRIQAYWRGYVVRKWYRNLRETVPP. Residues 293 to 352 form an RING-type 2; atypical zinc finger; that stretch reads CSICLAPLSPAGGQRVGAGQRSRETALLSCSHVFHHACLLALEEFSVGDRPPFHACPLCR.

The protein localises to the cytoplasm. Its function is as follows. May play a role in sperm formation. This Macaca fascicularis (Crab-eating macaque) protein is RING finger protein 32 (RNF32).